Here is a 300-residue protein sequence, read N- to C-terminus: Cation-efflux pump FieF (300 aa).

4 helical membrane-spanning segments follow: residues alanine 12 to tryptophan 32, isoleucine 39 to valine 59, alanine 82 to isoleucine 102, and proline 114 to phenylalanine 134. Aspartate 45 and aspartate 49 together coordinate Zn(2+). 2 residues coordinate Zn(2+): histidine 153 and aspartate 157. A run of 2 helical transmembrane segments spans residues serine 156–histidine 176 and phenylalanine 182–isoleucine 202.

The protein belongs to the cation diffusion facilitator (CDF) transporter (TC 2.A.4) family. FieF subfamily. As to quaternary structure, homodimer.

The protein localises to the cell inner membrane. The enzyme catalyses Zn(2+)(in) + H(+)(out) = Zn(2+)(out) + H(+)(in). It catalyses the reaction Cd(2+)(in) + H(+)(out) = Cd(2+)(out) + H(+)(in). It carries out the reaction Fe(2+)(in) + H(+)(out) = Fe(2+)(out) + H(+)(in). Its function is as follows. Divalent metal cation transporter which exports Zn(2+), Cd(2+) and possibly Fe(2+). May be involved in zinc and iron detoxification by efflux. This is Cation-efflux pump FieF from Cronobacter sakazakii (strain ATCC BAA-894) (Enterobacter sakazakii).